The following is a 435-amino-acid chain: Nematode resistance protein-like HSPRO2 (435 aa).

In terms of assembly, interacts with SNF4.

The protein localises to the cytoplasm. Functionally, positive regulator of basal resistance. In Arabidopsis thaliana (Mouse-ear cress), this protein is Nematode resistance protein-like HSPRO2 (HSPRO2).